Reading from the N-terminus, the 339-residue chain is Proto-oncogene serine/threonine-protein kinase mos (339 aa).

Positions valine 61–arginine 335 constitute a Protein kinase domain. ATP-binding positions include leucine 67–valine 75 and lysine 88. Aspartate 196 serves as the catalytic Proton acceptor.

It belongs to the protein kinase superfamily. Ser/Thr protein kinase family. Interacts with MAP2K1/MEK1. As to expression, expressed mainly in gonadal tissues, and cardiac and skeletal muscles.

Its subcellular location is the cytoplasm. It catalyses the reaction L-seryl-[protein] + ATP = O-phospho-L-seryl-[protein] + ADP + H(+). The catalysed reaction is L-threonyl-[protein] + ATP = O-phospho-L-threonyl-[protein] + ADP + H(+). In terms of biological role, serine/threonine kinase involved in the regulation of MAPK signaling. Is an activator of the ERK1/2 signaling cascade playing an essential role in the stimulation of oocyte maturation. This Rattus norvegicus (Rat) protein is Proto-oncogene serine/threonine-protein kinase mos.